The primary structure comprises 40 residues: Photosystem II reaction center protein J (40 aa).

A helical transmembrane segment spans residues 8 to 28 (IPLWLIGTVTGIPVIGSIGIF).

The protein belongs to the PsbJ family. In terms of assembly, PSII is composed of 1 copy each of membrane proteins PsbA, PsbB, PsbC, PsbD, PsbE, PsbF, PsbH, PsbI, PsbJ, PsbK, PsbL, PsbM, PsbT, PsbX, PsbY, PsbZ, Psb30/Ycf12, at least 3 peripheral proteins of the oxygen-evolving complex and a large number of cofactors. It forms dimeric complexes.

The protein localises to the plastid. Its subcellular location is the chloroplast thylakoid membrane. Its function is as follows. One of the components of the core complex of photosystem II (PSII). PSII is a light-driven water:plastoquinone oxidoreductase that uses light energy to abstract electrons from H(2)O, generating O(2) and a proton gradient subsequently used for ATP formation. It consists of a core antenna complex that captures photons, and an electron transfer chain that converts photonic excitation into a charge separation. The sequence is that of Photosystem II reaction center protein J from Chloranthus spicatus (Chulantree).